A 346-amino-acid polypeptide reads, in one-letter code: Tripartite motif-containing protein 44 (346 aa).

The interval 68–167 (TPPASGGDDA…ETEAESEFDP (100 aa)) is disordered. The span at 89-167 (EGEVESEVGE…ETEAESEFDP (79 aa)) shows a compositional bias: acidic residues. A B box-type zinc finger spans residues 176-217 (VAKRKCPDHGLDLSTYCQEDRQLICVLCPVIGAHRGHQLSTL). Residues C181, H184, C203, and H209 each coordinate Zn(2+). Positions 292-327 (AHVTEILADIQSHMDRLMTQMAQAKEQLDTSNESAE) form a coiled coil. The disordered stretch occupies residues 313-346 (AQAKEQLDTSNESAEPKAEGDEEGPSGASEEEDT). Acidic residues predominate over residues 332-346 (GDEEGPSGASEEEDT). Phosphoserine is present on residues S338 and S341.

Interacts (via coiled coil) with TRIM17 (via coiled coil). Expressed mainly in brain with high level in cerebral hemispheres and cerebellum. Lower expression in kidney, lung and spleen. In brain is detected in the hippocampus, thalamic and pretectal nuclei, substantia nigra, the dorsal part of the medulla, the cerebellum, in the olfactory nucleus, other cortical areas apart from hippocampus and the striatum. Indeed expression is confined in neuronal somata namely in the CA3 region and dentate gyrus of the hippocampus, caudate-putamen, parabranchial nucleus, olfactory nucleus, cortex, deep cerebellar nuclei and thalamus. Also highly expressed in the spleen. thymus and testis.

Its function is as follows. May play a role in the process of differentiation and maturation of neuronal cells. May regulate the activity of TRIM17. Is a negative regulator of PAX6 expression. The sequence is that of Tripartite motif-containing protein 44 (Trim44) from Mus musculus (Mouse).